The sequence spans 423 residues: Glutamate-1-semialdehyde 2,1-aminomutase (423 aa).

N6-(pyridoxal phosphate)lysine is present on K266.

The protein belongs to the class-III pyridoxal-phosphate-dependent aminotransferase family. HemL subfamily. As to quaternary structure, homodimer. Pyridoxal 5'-phosphate is required as a cofactor.

The protein localises to the cytoplasm. It catalyses the reaction (S)-4-amino-5-oxopentanoate = 5-aminolevulinate. It participates in porphyrin-containing compound metabolism; protoporphyrin-IX biosynthesis; 5-aminolevulinate from L-glutamyl-tRNA(Glu): step 2/2. The chain is Glutamate-1-semialdehyde 2,1-aminomutase from Desulfovibrio desulfuricans (strain ATCC 27774 / DSM 6949 / MB).